Here is a 1399-residue protein sequence, read N- to C-terminus: MKDLLNLLKNQGQIEEFDAIRIGLASPEMIRSWSFGEVKKPETINYRTFKPERDGLFCAKIFGPVKDYECLCGKYKRLKHRGVICEKCGVEVALAKVRRERMGHIELASPVAHIWFLKSLPSRIGLLLDMTLRDIERVLYFESYVVIDPGMTTLEKGQLLNDEQYFEALEEFGDDFDARMGAEAVHELLNAIDLEHEIGRLREEIPQTNSETKIKKLSKRLKLMEAFQGSGNKPEWMVLTVLPVLPPDLRPLVPLDGGRFATSDLNDLYRRVINRNNRLKRLLDLAAPDIIVRNEKRMLQEAVDALLDNGRRGRAITGSNKRPLKSLADMIKGKQGRFRQNLLGKRVDYSGRSVITVGPTLRLHQCGLPKKMALELFKPFIFGKLEGRGMATTIKAAKKMVERELPEVWDVLAEVIREHPVLLNRAPTLHRLGIQAFEPVLIEGKAIQLHPLVCAAYNADFDGDQMAVHVPLTLEAQLEARALMMSTNNILSPANGEPIIVPSQDVVMGLYYMTREAINAKGEGMAFADLQEVDRAYRSGQASLHARVKVRINEKVKGEDGQLTANTRIVDTTVGRALLFQVVPAGLPFDVVNQSMKKKAISKLINHCYRVVGLKDTVIFADQLMYTGFAYSTISGVSIGVNDFVIPDEKARIINAATDEVKEIESQYASGLVTQGEKYNKVIDLWSKANDEVSKAMMANLSKEKVVDREGKEVDQESFNSMYMMADSGARGSAAQIRQLAGMRGLMAKPDGSIIETPITANFREGLNVLQYFISTHGARKGLADTALKTANSGYLTRRLVDVAQDLVVTEIDCGTEHGLLMSPHIEGGDVVEPLGERVLGRVIARDVFKPGSDEVIVPAGTLIDEKWVDFLEVMSVDEVVVRSPITCETRHGICAMCYGRDLARGHRVNIGEAVGVIAAQSIGEPGTQLTMRTFHIGGAASRTSAADNVQVKNGGTIRLHNLKHVVRADGALVAVSRSGELAVADDFGRERERYKLPYGAVISVKEGDKVDPGAIVAKWDPHTHPIVTEVDGTVAFVGMEEGITVKRQTDELTGLTNIEVMDPKDRPAAGKDIRPAVKLIDAAGKDLLLPGTDVPAQYFLPANALVNLTDGAKVSIGDVVARIPQETSKTRDITGGLPRVADLFEARRPKEPSILAEISGTISFGKETKGKRRLVITPNDGSDPYEELIPKWRHLNVFEGEQVNRGEVISDGPSNPHDILRLLGVSSLAKYIVNEIQDVYRLQGVKINDKHIETILRQMLRKVEVSESGDSSFIKGDQVELTQVLEENEQLGTEDKFPAKYERVLLGITKASLSTESFISAASFQETTRVLTEAAVTGKRDFLRGLKENVVVGRLIPAGTGLAYHSERKRQRDLGKPQRVSASEAEAALTEALNSSGN.

Cys70, Cys72, Cys85, and Cys88 together coordinate Zn(2+). Residues Asp460, Asp462, and Asp464 each coordinate Mg(2+). Cys814, Cys888, Cys895, and Cys898 together coordinate Zn(2+). The segment at 1367-1399 (SERKRQRDLGKPQRVSASEAEAALTEALNSSGN) is disordered. Residues 1382 to 1399 (SASEAEAALTEALNSSGN) are compositionally biased toward low complexity.

It belongs to the RNA polymerase beta' chain family. In terms of assembly, the RNAP catalytic core consists of 2 alpha, 1 beta, 1 beta' and 1 omega subunit. When a sigma factor is associated with the core the holoenzyme is formed, which can initiate transcription. Mg(2+) is required as a cofactor. Requires Zn(2+) as cofactor.

It carries out the reaction RNA(n) + a ribonucleoside 5'-triphosphate = RNA(n+1) + diphosphate. Functionally, DNA-dependent RNA polymerase catalyzes the transcription of DNA into RNA using the four ribonucleoside triphosphates as substrates. This Pseudomonas paraeruginosa (strain DSM 24068 / PA7) (Pseudomonas aeruginosa (strain PA7)) protein is DNA-directed RNA polymerase subunit beta'.